Here is a 293-residue protein sequence, read N- to C-terminus: Deubiquitinase OTUD6B (293 aa).

Residue Met1 is modified to N-acetylmethionine. An OTU domain is found at 147–284; sequence LEIKQIPSDG…GEHYNSVTRL (138 aa). The tract at residues 152–158 is cys-loop; that stretch reads IPSDGHC. The active site involves Asp155. Cys158 acts as the Nucleophile in catalysis. The tract at residues 219-229 is variable-loop; sequence IVNTAAWGGQL. A his-loop region spans residues 267–277; the sequence is YMRHAYGLGEH. His277 is an active-site residue.

In terms of assembly, interacts with the eukaryotic translation initiation factor 4F complex.

The enzyme catalyses Thiol-dependent hydrolysis of ester, thioester, amide, peptide and isopeptide bonds formed by the C-terminal Gly of ubiquitin (a 76-residue protein attached to proteins as an intracellular targeting signal).. Deubiquitinating enzyme that may play a role in the ubiquitin-dependent regulation of protein synthesis, downstream of mTORC1. May associate with the protein synthesis initiation complex and modify its ubiquitination to repress translation. May also repress DNA synthesis and modify different cellular targets thereby regulating cell growth and proliferation. May also play a role in proteasome assembly and function. Its function is as follows. Stimulates protein synthesis. Influences the expression of CCND1/cyclin D1 by promoting its translation and regulates MYC/c-Myc protein stability. This Homo sapiens (Human) protein is Deubiquitinase OTUD6B.